Consider the following 432-residue polypeptide: Homogentisate 1,2-dioxygenase (432 aa).

Histidine 286 acts as the Proton acceptor in catalysis. Fe cation-binding residues include histidine 329 and glutamate 335. Homogentisate contacts are provided by tyrosine 344 and histidine 365. Histidine 365 contributes to the Fe cation binding site.

Belongs to the homogentisate dioxygenase family. In terms of assembly, hexamer; dimer of trimers. Fe cation serves as cofactor.

The catalysed reaction is homogentisate + O2 = 4-maleylacetoacetate + H(+). The protein operates within amino-acid degradation; L-phenylalanine degradation; acetoacetate and fumarate from L-phenylalanine: step 4/6. Functionally, involved in the catabolism of homogentisate (2,5-dihydroxyphenylacetate or 2,5-OH-PhAc), a central intermediate in the degradation of phenylalanine and tyrosine. Catalyzes the oxidative ring cleavage of the aromatic ring of homogentisate to yield maleylacetoacetate. The sequence is that of Homogentisate 1,2-dioxygenase from Bordetella pertussis (strain Tohama I / ATCC BAA-589 / NCTC 13251).